Consider the following 311-residue polypeptide: Pyrimidine-specific ribonucleoside hydrolase RihA (311 aa).

Residue His240 is part of the active site.

This sequence belongs to the IUNH family. RihA subfamily.

In terms of biological role, hydrolyzes cytidine or uridine to ribose and cytosine or uracil, respectively. The sequence is that of Pyrimidine-specific ribonucleoside hydrolase RihA from Salmonella agona (strain SL483).